A 324-amino-acid polypeptide reads, in one-letter code: Elongation factor P--(R)-beta-lysine ligase (324 aa).

Substrate is bound at residue 75–77 (SPE). Residues 99–101 (RNE) and Asn108 contribute to the ATP site. Tyr117 serves as a coordination point for substrate. Position 243-244 (243-244 (EL)) interacts with ATP. Glu250 contributes to the substrate binding site. Gly299 is a binding site for ATP.

The protein belongs to the class-II aminoacyl-tRNA synthetase family. EpmA subfamily. In terms of assembly, homodimer.

It carries out the reaction D-beta-lysine + L-lysyl-[protein] + ATP = N(6)-((3R)-3,6-diaminohexanoyl)-L-lysyl-[protein] + AMP + diphosphate + H(+). With EpmB is involved in the beta-lysylation step of the post-translational modification of translation elongation factor P (EF-P). Catalyzes the ATP-dependent activation of (R)-beta-lysine produced by EpmB, forming a lysyl-adenylate, from which the beta-lysyl moiety is then transferred to the epsilon-amino group of a conserved specific lysine residue in EF-P. The sequence is that of Elongation factor P--(R)-beta-lysine ligase from Pseudoalteromonas translucida (strain TAC 125).